The primary structure comprises 157 residues: 3-dehydroquinate dehydratase (157 aa).

Tyr-22 (proton acceptor) is an active-site residue. Substrate contacts are provided by Asn-73, His-79, and Asp-86. The active-site Proton donor is His-99. Substrate is bound by residues Leu-100–Ser-101 and Arg-110.

The protein belongs to the type-II 3-dehydroquinase family. As to quaternary structure, homododecamer.

It carries out the reaction 3-dehydroquinate = 3-dehydroshikimate + H2O. Its pathway is metabolic intermediate biosynthesis; chorismate biosynthesis; chorismate from D-erythrose 4-phosphate and phosphoenolpyruvate: step 3/7. Its function is as follows. Catalyzes a trans-dehydration via an enolate intermediate. This is 3-dehydroquinate dehydratase from Roseiflexus castenholzii (strain DSM 13941 / HLO8).